The chain runs to 755 residues: 17S U2 SnRNP complex component HTATSF1 (755 aa).

2 disordered regions span residues 1–53 and 81–122; these read MSGT…YEWD and GASS…KAES. Serine 2 bears the N-acetylserine mark. Residues 90–122 are compositionally biased toward basic and acidic residues; that stretch reads EDVHARTAEEPPQEKAPEPTDARKKGEKRKAES. RRM domains lie at 133–218 and 264–349; these read TNVY…VAKF and RVVI…AWDG. Positions 259–353 are U2AF homology motif (UHM); sequence RMRHERVVII…AQAWDGTTDY (95 aa). Lysine 297 is subject to N6-acetyllysine. The tract at residues 380–415 is disordered; sequence RGLRRSDSVSASERAGPSRARHFSEHPSTSKMNAQE. Residues 381-755 form a mediates interaction with the P-TEFb complex region; sequence GLRRSDSVSA…LSSDDDDDDI (375 aa). Serine 387, serine 403, serine 407, and serine 409 each carry phosphoserine. Positions 405–415 are enriched in polar residues; it reads HPSTSKMNAQE. Residues lysine 429 and lysine 430 each participate in a glycyl lysine isopeptide (Lys-Gly) (interchain with G-Cter in SUMO2) cross-link. The segment at 433–755 is disordered; it reads KTEDGGEFEE…LSSDDDDDDI (323 aa). Residues serine 445, serine 452, and serine 453 each carry the phosphoserine modification. Residues 462-476 are compositionally biased toward basic and acidic residues; that stretch reads CPEKESEEGCPKRGF. Serine 481, serine 485, serine 494, serine 498, serine 521, and serine 529 each carry phosphoserine. Positions 508–538 are enriched in basic and acidic residues; that stretch reads LKNDCEENGLAKESEDDLNKESEEEVGPTKE. Residues 539-552 are compositionally biased toward acidic residues; that stretch reads SEEDDSEKESDEDC. Positions 553–563 are enriched in basic and acidic residues; sequence SEKQSEDGSER. Phosphoserine occurs at positions 557, 561, and 579. Over residues 564–579 the composition is skewed to acidic residues; the sequence is EFEENGLEKDLDEEGS. The segment covering 580 to 590 has biased composition (basic and acidic residues); that stretch reads EKELHENVLDK. Residues 591–606 are compositionally biased toward acidic residues; that stretch reads ELEENDSENSEFEDDG. Phosphoserine is present on residues serine 597, serine 600, serine 607, serine 616, and serine 624. Composition is skewed to acidic residues over residues 613–633 and 640–651; these read EEGS…EEDT and DESDEKEDEEYA. Position 633 is a phosphothreonine (threonine 633). Residue serine 642 is modified to Phosphoserine. The segment covering 652–674 has biased composition (basic and acidic residues); that stretch reads DEKGLEAADKKAEEGDADEKLFE. Over residues 675-713 the composition is skewed to acidic residues; it reads ESDDKEDEDADGKEVEDADEKLFEDDDSNEKLFDEEEDS. A phosphoserine mark is found at serine 676, serine 702, serine 713, serine 714, and serine 721. Basic and acidic residues predominate over residues 714–725; it reads SEKLFDDSDERG. Serine 748 is modified (phosphoserine; by CK2).

Belongs to the HTATSF1 family. In terms of assembly, component of the 17S U2 SnRNP complex, a ribonucleoprotein complex that contains small nuclear RNA (snRNA) U2 and a number of specific proteins. Within the 17S U2 SnRNP complex, interacts (via UHM region) directly with SF3B1. Component of a complex which is at least composed of HTATSF1/Tat-SF1, the P-TEFb complex components CDK9 and CCNT1, RNA polymerase II, SUPT5H, and NCL/nucleolin. Interacts with GTF2F2/RAP30 and POLR2A. Interacts with TCERG1/CA150. Interacts with (poly-ADP-ribosylated) RPA1; promoting HTATSF1 recruitment to DNA damage sites. Interacts (when phosphorylated) with TOPBP1; promoting recruitment of TOPBP1 to DNA damage sites during S-phase. Post-translationally, phosphorylation at Ser-748 by CK2 during S-phase in response to DNA damage promotes interaction with TOPBP1 and double-strand break (DSB) repair via homologous recombination. Widely expressed.

Its subcellular location is the nucleus. The protein localises to the chromosome. Component of the 17S U2 SnRNP complex of the spliceosome, a large ribonucleoprotein complex that removes introns from transcribed pre-mRNAs. The 17S U2 SnRNP complex (1) directly participates in early spliceosome assembly and (2) mediates recognition of the intron branch site during pre-mRNA splicing by promoting the selection of the pre-mRNA branch-site adenosine, the nucleophile for the first step of splicing. Within the 17S U2 SnRNP complex, HTATSF1 is required to stabilize the branchpoint-interacting stem loop. HTATSF1 is displaced from the 17S U2 SnRNP complex before the stable addition of the 17S U2 SnRNP complex to the spliceosome, destabilizing the branchpoint-interacting stem loop and allowing to probe intron branch site sequences. Also acts as a regulator of transcriptional elongation, possibly by mediating the reciprocal stimulatory effect of splicing on transcriptional elongation. Involved in double-strand break (DSB) repair via homologous recombination in S-phase by promoting the recruitment of TOPBP1 to DNA damage sites. Mechanistically, HTATSF1 is (1) recruited to DNA damage sites in S-phase via interaction with poly-ADP-ribosylated RPA1 and (2) phosphorylated by CK2, promoting recruitment of TOPBP1, thereby facilitating RAD51 nucleofilaments formation and RPA displacement, followed by homologous recombination. Functionally, (Microbial infection) In case of infection by HIV-1, it is up-regulated by the HIV-1 proteins NEF and gp120, acts as a cofactor required for the Tat-enhanced transcription of the virus. This chain is 17S U2 SnRNP complex component HTATSF1, found in Homo sapiens (Human).